Here is a 413-residue protein sequence, read N- to C-terminus: MVFKLLEQAGIKIDLDDEPKKVQTAPQFDDDDENEIRIVIVGVGGSGNNTITRLYDLGVQGAELIAMNTDAQALKHAKAHKKLLLGKDLTQGKGSGGDPEVGYRAAEASAHEIAETIGDADLVFITAGMGNGTGTGAAPVVARVIKERARHNGRFREPLVISVVTYPFKNEGKIREEKAKAGIKALLYYSDTVVIIENDKLLQLVPKLPINAAFRFADEIIARMVKGITETIKLPSMVNIDFADVYSIMHNGGAALIGIGESDSSNRAVDAVKNALQNKLLDVEYGSGEKALVHFTVGPDVSLGEINEAMNIVYEKLGEKSEIKWGARIDEDMGKMVRAMVIMTGVKSPHILGGETALQLPVKESLLPAEPKAGFNSFEDKIYKVISRKSDEKPGSDMRGYINKLLADFDDLS.

GTP contacts are provided by residues 132–134, Glu171, Arg175, and Asp218; that span reads GTG.

The protein belongs to the FtsZ family. In terms of assembly, homodimer. Polymerizes to form a dynamic ring structure in a strictly GTP-dependent manner. Interacts directly with several other division proteins.

It localises to the cytoplasm. Essential cell division protein that forms a contractile ring structure (Z ring) at the future cell division site. The regulation of the ring assembly controls the timing and the location of cell division. One of the functions of the FtsZ ring is to recruit other cell division proteins to the septum to produce a new cell wall between the dividing cells. Binds GTP and shows GTPase activity. This Thermococcus kodakarensis (strain ATCC BAA-918 / JCM 12380 / KOD1) (Pyrococcus kodakaraensis (strain KOD1)) protein is Cell division protein FtsZ 2.